The sequence spans 112 residues: uncharacterized protein (112 aa).

It localises to the plastid. The protein localises to the chloroplast. This is an uncharacterized protein from Chlamydomonas reinhardtii (Chlamydomonas smithii).